A 137-amino-acid chain; its full sequence is Small ribosomal subunit protein bS16m (137 aa).

Residues 1–34 (MVHLTTLLCKAYRGGHLTIRLALGGCTNRPFYRI) constitute a mitochondrion transit peptide. T130 is modified (phosphothreonine).

This sequence belongs to the bacterial ribosomal protein bS16 family. In terms of assembly, component of the mitochondrial ribosome small subunit (28S) which comprises a 12S rRNA and about 30 distinct proteins.

The protein resides in the mitochondrion. The protein is Small ribosomal subunit protein bS16m (MRPS16) of Pongo abelii (Sumatran orangutan).